The primary structure comprises 327 residues: Surface protein P12p (327 aa).

2 6-Cys domains span residues 21-168 (NIEI…LKKN) and 169-304 (IIFG…FSNY). 6 disulfide bridges follow: Cys25/Cys60, Cys74/Cys144, Cys93/Cys142, Cys173/Cys208, Cys223/Cys285, and Cys234/Cys283. 3 N-linked (GlcNAc...) asparagine glycosylation sites follow: Asn246, Asn264, and Asn298.

It is found in the cell surface. It localises to the cell membrane. This Plasmodium berghei (strain Anka) protein is Surface protein P12p (P12p).